Here is a 72-residue protein sequence, read N- to C-terminus: UPF0346 protein GTNG_1419 (72 aa).

This sequence belongs to the UPF0346 family.

In Geobacillus thermodenitrificans (strain NG80-2), this protein is UPF0346 protein GTNG_1419.